Here is a 205-residue protein sequence, read N- to C-terminus: Putative C-type lectin protein FPV001/FPV260 (205 aa).

The region spanning 84-187 (CPRDWISHNG…CSVRRYLVCK (104 aa)) is the C-type lectin domain.

The protein is Putative C-type lectin protein FPV001/FPV260 of Fowlpox virus (strain NVSL) (FPV).